The chain runs to 40 residues: MTDTTGRIPLWMIGTLAGILVISLIGIFFYGSYSGLGSSL.

Residues 8 to 28 form a helical membrane-spanning segment; that stretch reads IPLWMIGTLAGILVISLIGIF.

It belongs to the PsbJ family. PSII is composed of 1 copy each of membrane proteins PsbA, PsbB, PsbC, PsbD, PsbE, PsbF, PsbH, PsbI, PsbJ, PsbK, PsbL, PsbM, PsbT, PsbX, PsbY, PsbZ, Psb30/Ycf12, at least 3 peripheral proteins of the oxygen-evolving complex and a large number of cofactors. It forms dimeric complexes.

The protein localises to the plastid membrane. Functionally, one of the components of the core complex of photosystem II (PSII). PSII is a light-driven water:plastoquinone oxidoreductase that uses light energy to abstract electrons from H(2)O, generating O(2) and a proton gradient subsequently used for ATP formation. It consists of a core antenna complex that captures photons, and an electron transfer chain that converts photonic excitation into a charge separation. This Cuscuta gronovii (Common dodder) protein is Photosystem II reaction center protein J.